An 884-amino-acid chain; its full sequence is Translation initiation factor IF-2 (884 aa).

The disordered stretch occupies residues 93–288; that stretch reads VNTPEAEQAK…KGKRKPSTLQ (196 aa). Residues 99–209 are compositionally biased toward basic and acidic residues; the sequence is EQAKAEEQAQ…KMAAENEGKW (111 aa). A compositionally biased stretch (polar residues) spans 216–229; that stretch reads QTESADYHVTTSQH. Over residues 231-246 the composition is skewed to basic and acidic residues; it reads RAAEDENDAKVEGDRR. The span at 247–261 shows a compositional bias: basic residues; the sequence is SRTRGGKATKQKKGN. The segment covering 262–275 has biased composition (basic and acidic residues); the sequence is KLSESKADREEARA. Residues 383 to 552 enclose the tr-type G domain; it reads HRAPVVTIMG…LLQAEVLELK (170 aa). The interval 392–399 is G1; the sequence is GHVDHGKT. 392–399 serves as a coordination point for GTP; sequence GHVDHGKT. A G2 region spans residues 417-421; the sequence is GITQH. Positions 438–441 are G3; sequence DTPG. GTP is bound by residues 438–442 and 492–495; these read DTPGH and NKID. The segment at 492–495 is G4; that stretch reads NKID. Residues 528–530 are G5; the sequence is SAK.

Belongs to the TRAFAC class translation factor GTPase superfamily. Classic translation factor GTPase family. IF-2 subfamily.

It is found in the cytoplasm. In terms of biological role, one of the essential components for the initiation of protein synthesis. Protects formylmethionyl-tRNA from spontaneous hydrolysis and promotes its binding to the 30S ribosomal subunits. Also involved in the hydrolysis of GTP during the formation of the 70S ribosomal complex. This Yersinia pestis bv. Antiqua (strain Antiqua) protein is Translation initiation factor IF-2.